A 336-amino-acid chain; its full sequence is 4-hydroxy-3-methylbut-2-enyl diphosphate reductase (336 aa).

Residue cysteine 37 participates in [4Fe-4S] cluster binding. 2 residues coordinate (2E)-4-hydroxy-3-methylbut-2-enyl diphosphate: histidine 66 and histidine 99. Residues histidine 66 and histidine 99 each contribute to the dimethylallyl diphosphate site. Isopentenyl diphosphate-binding residues include histidine 66 and histidine 99. [4Fe-4S] cluster is bound at residue cysteine 121. A (2E)-4-hydroxy-3-methylbut-2-enyl diphosphate-binding site is contributed by histidine 149. Histidine 149 contacts dimethylallyl diphosphate. Isopentenyl diphosphate is bound at residue histidine 149. Glutamate 151 functions as the Proton donor in the catalytic mechanism. Residue threonine 189 participates in (2E)-4-hydroxy-3-methylbut-2-enyl diphosphate binding. Cysteine 219 provides a ligand contact to [4Fe-4S] cluster. Residues serine 247, serine 248, asparagine 249, and serine 292 each contribute to the (2E)-4-hydroxy-3-methylbut-2-enyl diphosphate site. The dimethylallyl diphosphate site is built by serine 247, serine 248, asparagine 249, and serine 292. Positions 247, 248, 249, and 292 each coordinate isopentenyl diphosphate.

It belongs to the IspH family. The cofactor is [4Fe-4S] cluster.

The enzyme catalyses isopentenyl diphosphate + 2 oxidized [2Fe-2S]-[ferredoxin] + H2O = (2E)-4-hydroxy-3-methylbut-2-enyl diphosphate + 2 reduced [2Fe-2S]-[ferredoxin] + 2 H(+). It catalyses the reaction dimethylallyl diphosphate + 2 oxidized [2Fe-2S]-[ferredoxin] + H2O = (2E)-4-hydroxy-3-methylbut-2-enyl diphosphate + 2 reduced [2Fe-2S]-[ferredoxin] + 2 H(+). It participates in isoprenoid biosynthesis; dimethylallyl diphosphate biosynthesis; dimethylallyl diphosphate from (2E)-4-hydroxy-3-methylbutenyl diphosphate: step 1/1. The protein operates within isoprenoid biosynthesis; isopentenyl diphosphate biosynthesis via DXP pathway; isopentenyl diphosphate from 1-deoxy-D-xylulose 5-phosphate: step 6/6. Its function is as follows. Catalyzes the conversion of 1-hydroxy-2-methyl-2-(E)-butenyl 4-diphosphate (HMBPP) into a mixture of isopentenyl diphosphate (IPP) and dimethylallyl diphosphate (DMAPP). Acts in the terminal step of the DOXP/MEP pathway for isoprenoid precursor biosynthesis. The sequence is that of 4-hydroxy-3-methylbut-2-enyl diphosphate reductase from Nocardia farcinica (strain IFM 10152).